We begin with the raw amino-acid sequence, 332 residues long: Beta-chimaerin (332 aa).

A Phorbol-ester/DAG-type zinc finger spans residues 78–128; sequence THNFKVHTFRGPHWCEYCANFMWGLIAQGVRCSDCGLNVHKQCSKHVPNDC. Residues 141 to 332 enclose the Rho-GAP domain; that stretch reads CDLTTLVKAH…ILIENEDVLF (192 aa).

The protein localises to the membrane. Its activity is regulated as follows. In the inactive state, the N terminus protrudes into the active site of the Rho-GAP domain, sterically blocking Rac binding. Phospholipid binding to the Phorbol-ester/DAG-type zinc-finger/C1 domain triggers the cooperative dissociation of these interactions, allowing the N-terminus to move out of the active site and thereby activating the enzyme. GTPase-activating protein for p21-rac. The protein is Beta-chimaerin (Chn2) of Mus musculus (Mouse).